The chain runs to 1066 residues: MGFELDRFDGDVDPDLKCALCHKVLEDPLTTPCGHVFCAGCVLPWVVQEGSCPARCRGRLSAKELNHVLPLKRLILKLDIKCAYATRGCGRVVKLQQLPEHLERCDFAPARCRHAGCGQVLLRRDVEAHMRDACDARPVGRCQEGCGLPLTHGEQRAGGHCCARALRAHNGALQARLGALHKALKKEALRAGKREKSLVAQLAAAQLELQMTALRYQKKFTEYSARLDSLSRCVAAPPGGKGEETKSLTLVLHRDSGSLGFNIIGGRPSVDNHDGSSSEGIFVSKIVDSGPAAKEGGLQIHDRIIEVNGRDLSRATHDQAVEAFKTAKEPIVVQVLRRTPRTKMFTPPSESQLVDTGTQTDITFEHIMALTKMSSPSPPVLDPYLLPEEHPSAHEYYDPNDYIGDIHQEMDREELELEEVDLYRMNSQDKLGLTVCYRTDDEDDIGIYISEIDPNSIAAKDGRIREGDRIIQINGIEVQNREEAVALLTSEENKNFSLLIARPELQLDEGWMDDDRNDFLDDLHMDMLEEQHHQAMQFTASVLQQKKHDEDGGTTDTATILSNQHEKDSGVGRTDESTRNDESSEQENNGDDATASSNPLAGQRKLTCSQDTLGSGDLPFSNESFISADCTDADYLGIPVDECERFRELLELKCQVKSATPYGLYYPSGPLDAGKSDPESVDKELELLNEELRSIELECLSIVRAHKMQQLKEQYRESWMLHNSGFRNYNTSIDVRRHELSDITELPEKSDKDSSSAYNTGESCRSTPLTLEISPDNSLRRAAEGISCPSSEGAVGTTEAYGPASKNLLSITEDPEVGTPTYSPSLKELDPNQPLESKERRASDGSRSPTPSQKLGSAYLPSYHHSPYKHAHIPAHAQHYQSYMQLIQQKSAVEYAQSQMSLVSMCKDLSSPTPSEPRMEWKVKIRSDGTRYITKRPVRDRLLRERALKIREERSGMTTDDDAVSEMKMGRYWSKEERKQHLVKAKEQRRRREFMMQSRLDCLKEQQAADDRKEMNILELSHKKMMKKRNKKIFDNWMTIQELLTHGTKSPDGTRVYNSFLSVTTV.

The segment at 18 to 56 (CALCHKVLEDPLTTPCGHVFCAGCVLPWVVQEGSCPARC) adopts an RING-type; degenerate zinc-finger fold. The segment at 100–158 (EHLERCDFAPARCRHAGCGQVLLRRDVEAHMRDACDARPVGRCQEGCGLPLTHGEQRAG) adopts a TRAF-type zinc-finger fold. 2 PDZ domains span residues 249 to 339 (TLVL…LRRT) and 419 to 503 (EVDL…IARP). Phosphoserine is present on Ser427. A disordered region spans residues 545–603 (QKKHDEDGGTTDTATILSNQHEKDSGVGRTDESTRNDESSEQENNGDDATASSNPLAGQ). Positions 554 to 563 (TTDTATILSN) are enriched in polar residues. Residues 564 to 582 (QHEKDSGVGRTDESTRNDE) show a composition bias toward basic and acidic residues. Residues 594 to 603 (TASSNPLAGQ) show a composition bias toward polar residues. A coiled-coil region spans residues 679-704 (ESVDKELELLNEELRSIELECLSIVR). Over residues 744–754 (TELPEKSDKDS) the composition is skewed to basic and acidic residues. Disordered stretches follow at residues 744 to 778 (TELP…PDNS) and 808 to 863 (LLSI…LPSY). Polar residues-rich tracts occupy residues 755 to 769 (SSAY…STPL) and 845 to 855 (GSRSPTPSQKL). Residues 975–1025 (KEERKQHLVKAKEQRRRREFMMQSRLDCLKEQQAADDRKEMNILELSHKKM) adopt a coiled-coil conformation.

As to quaternary structure, interacts with NLGN1 and EFNB2. Interacts with UBE2D2 and with MUSK via the first PDZ domain. Auto-ubiquitinated. Widely expressed, including in the heart, skeletal muscle and liver and, at lower levels, in the brain, colon, small intestine, placenta and lung. Down-regulated in ovarian serous papillary tumors.

It is found in the synapse. The protein localises to the cytoplasm. The enzyme catalyses S-ubiquitinyl-[E2 ubiquitin-conjugating enzyme]-L-cysteine + [acceptor protein]-L-lysine = [E2 ubiquitin-conjugating enzyme]-L-cysteine + N(6)-ubiquitinyl-[acceptor protein]-L-lysine.. Its pathway is protein modification; protein ubiquitination. In terms of biological role, E3 ubiquitin-protein ligase. Plays an important role in regulating the surface level of MUSK on myotubes. Mediates the ubiquitination of MUSK, promoting its endocytosis and lysosomal degradation. Might contribute to terminal myogenic differentiation. This chain is E3 ubiquitin-protein ligase PDZRN3 (PDZRN3), found in Homo sapiens (Human).